The chain runs to 810 residues: Protein kinase C-binding protein NELL1 (810 aa).

The first 21 residues, 1-21, serve as a signal peptide directing secretion; sequence MPMDVILVLWFCVCTARTVLG. Asparagine 40, asparagine 53, asparagine 83, asparagine 224, asparagine 294, and asparagine 372 each carry an N-linked (GlcNAc...) asparagine glycan. The 171-residue stretch at 57-227 folds into the Laminin G-like domain; sequence AFLFQDVQRE…TQCPNLNRTC (171 aa). The 62-residue stretch at 271–332 folds into the VWFC 1 domain; the sequence is KTCQVSGLLY…ISGQCCKVCR (62 aa). Intrachain disulfides connect cysteine 395/cysteine 407, cysteine 401/cysteine 416, and cysteine 418/cysteine 432. Ca(2+)-binding residues include aspartate 434, isoleucine 435, and glutamate 437. Residues 434–475 enclose the EGF-like 1; calcium-binding domain; sequence DIDECAAKMHYCHANTVCVNLPGLYRCDCVPGYIRVDDFSCT. Disulfide bonds link cysteine 438–cysteine 451, cysteine 445–cysteine 460, cysteine 462–cysteine 474, cysteine 480–cysteine 493, cysteine 487–cysteine 502, cysteine 504–cysteine 515, cysteine 519–cysteine 529, cysteine 523–cysteine 535, cysteine 537–cysteine 546, cysteine 553–cysteine 566, cysteine 560–cysteine 575, cysteine 577–cysteine 594, cysteine 600–cysteine 613, cysteine 607–cysteine 622, and cysteine 624–cysteine 630. Residues asparagine 453, leucine 454, and leucine 457 each contribute to the Ca(2+) site. Positions 476–516 constitute an EGF-like 2; calcium-binding domain; that stretch reads EHDDCGSGQHNCDKNAICTNTVQGHSCTCQPGYVGNGTICK. A glycan (N-linked (GlcNAc...) asparagine) is linked at asparagine 511. The EGF-like 3 domain maps to 517–547; sequence AFCEEGCRYGGTCVAPNKCVCPSGFTGSHCE. Residues 549-587 enclose the EGF-like 4; calcium-binding domain; the sequence is DIDECAEGFVECHNHSRCVNLPGWYHCECRSGFHDDGTY. Residue asparagine 562 is glycosylated (N-linked (GlcNAc...) asparagine). The 36-residue stretch at 596–631 folds into the EGF-like 5; calcium-binding domain; that stretch reads DIDECALRTHTCWNDSACINLAGGFDCLCPSGPSCS. Asparagine 609 carries N-linked (GlcNAc...) asparagine glycosylation. 2 VWFC domains span residues 632 to 687 and 692 to 750; these read GDCP…PECD and SQCL…PRCV. Asparagine 708 is a glycosylation site (N-linked (GlcNAc...) asparagine).

In terms of assembly, interacts with ATRAID; the interaction promotes osteoblast cell differentiation and mineralization. Homotrimer. Binds to PKC beta-1. Interacts with ROBO3.

The protein localises to the cytoplasm. Its subcellular location is the nucleus envelope. The protein resides in the secreted. In terms of biological role, plays a role in the control of cell growth and differentiation. Promotes osteoblast cell differentiation and terminal mineralization. This is Protein kinase C-binding protein NELL1 (Nell1) from Rattus norvegicus (Rat).